The chain runs to 115 residues: MRVGCDIIAISRIEKIHSRHGKNFLDKFLSPKEQILIKNPATLAGLWAAKEAASKALGVGICELCSFFDIEISKDEKNAPKLKYSQKITKDFNITQTSLSISHDNGFAIAIVAIV.

The Mg(2+) site is built by aspartate 6 and glutamate 51.

This sequence belongs to the P-Pant transferase superfamily. AcpS family. It depends on Mg(2+) as a cofactor.

Its subcellular location is the cytoplasm. The enzyme catalyses apo-[ACP] + CoA = holo-[ACP] + adenosine 3',5'-bisphosphate + H(+). Transfers the 4'-phosphopantetheine moiety from coenzyme A to a Ser of acyl-carrier-protein. The chain is Holo-[acyl-carrier-protein] synthase from Campylobacter jejuni subsp. jejuni serotype O:23/36 (strain 81-176).